A 378-amino-acid polypeptide reads, in one-letter code: Decaprenyl-diphosphate synthase subunit 1 (378 aa).

Residues Lys72, Arg75, and His130 each coordinate isopentenyl diphosphate. Positions 137 and 141 each coordinate Mg(2+). Position 147 (Arg147) interacts with isopentenyl diphosphate.

It belongs to the FPP/GGPP synthase family. Heterotetramer of 2 dps1 and 2 dlp1 subunits. Mg(2+) serves as cofactor.

The protein resides in the mitochondrion. It catalyses the reaction 7 isopentenyl diphosphate + (2E,6E)-farnesyl diphosphate = all-trans-decaprenyl diphosphate + 7 diphosphate. Its pathway is cofactor biosynthesis; ubiquinone biosynthesis. Functionally, supplies decaprenyl diphosphate, the precursor for the side chain of the isoprenoid quinones ubiquinone-10. This is Decaprenyl-diphosphate synthase subunit 1 (dps1) from Schizosaccharomyces pombe (strain 972 / ATCC 24843) (Fission yeast).